The primary structure comprises 349 residues: MYISNLRLQNFRNIPAKSFDFKNSINFIVGKNGSGKTSILESIYFLSHSRSFRSSQLNRIINHNADEFIIYTKAYNPDEITISLSRKKNSNNISKLNLEIQKNHTEITRNLPIQLINPESFNIINSGAQQRCKVLDWGAFYLDKTFLKIWQQTKFLVKQRNSALKQNYPYSYILSIDKKLCEFAEILDYKRQAYFTKLKPKIYEILSHFNPNLQLDIDYFRGWNLHKSLAQVLEESFNYDNKYKVTNHGPHKADIVLSVSHKPIQDIFSRGQQKLLICALKLAQGEIHNSENDNKCIYLIDDITSELDSIHTLTLFNYLKQLKSQVFITTTEKNKINEFIDTNSYILEI.

30–37 (GKNGSGKT) contributes to the ATP binding site.

Belongs to the RecF family.

It localises to the cytoplasm. In terms of biological role, the RecF protein is involved in DNA metabolism; it is required for DNA replication and normal SOS inducibility. RecF binds preferentially to single-stranded, linear DNA. It also seems to bind ATP. In Francisella tularensis subsp. tularensis (strain FSC 198), this protein is DNA replication and repair protein RecF.